The following is a 249-amino-acid chain: Triosephosphate isomerase (249 aa).

2 residues coordinate substrate: N12 and K14. N6-acetyllysine is present on K14. Y68 carries the post-translational modification 3'-nitrotyrosine. S80 is subject to Phosphoserine. The Electrophile role is filled by H96. S106 bears the Phosphoserine mark. K142 is covalently cross-linked (Glycyl lysine isopeptide (Lys-Gly) (interchain with G-Cter in SUMO1)). K149 is modified (N6-succinyllysine). K156 is modified (N6-acetyllysine; alternate). An N6-succinyllysine; alternate modification is found at K156. S159 carries the phosphoserine modification. Catalysis depends on E166, which acts as the Proton acceptor. The residue at position 173 (T173) is a Phosphothreonine. K194 carries the post-translational modification N6-acetyllysine; alternate. K194 carries the post-translational modification N6-succinyllysine; alternate. K194 is modified (N6-methyllysine; alternate). S198 carries the phosphoserine modification. Y209 carries the 3'-nitrotyrosine modification. S212 carries the phosphoserine modification. Position 214 is a phosphothreonine (T214). Residue S223 is modified to Phosphoserine. N6-acetyllysine is present on K238.

It belongs to the triosephosphate isomerase family. Homodimer.

Its subcellular location is the cytoplasm. The enzyme catalyses dihydroxyacetone phosphate = methylglyoxal + phosphate. It catalyses the reaction D-glyceraldehyde 3-phosphate = dihydroxyacetone phosphate. It participates in carbohydrate degradation; glycolysis; D-glyceraldehyde 3-phosphate from glycerone phosphate: step 1/1. It functions in the pathway carbohydrate biosynthesis; gluconeogenesis. Triosephosphate isomerase is an extremely efficient metabolic enzyme that catalyzes the interconversion between dihydroxyacetone phosphate (DHAP) and D-glyceraldehyde-3-phosphate (G3P) in glycolysis and gluconeogenesis. Its function is as follows. It is also responsible for the non-negligible production of methylglyoxal a reactive cytotoxic side-product that modifies and can alter proteins, DNA and lipids. The protein is Triosephosphate isomerase (TPI1) of Bos taurus (Bovine).